The chain runs to 152 residues: Transcription factor ATOH7 (152 aa).

One can recognise a bHLH domain in the interval Arg-40–Leu-92.

Forms a heterodimer with TCF3 isoform E47; interaction may be required for DNA-binding in certain situations.

The protein resides in the nucleus. Its subcellular location is the perikaryon. The protein localises to the cell projection. It localises to the axon. Functionally, transcription factor that binds to DNA at the consensus sequence 5'-CAG[GC]TG-3'. Dimerization with TCF3 isoform E47 may be required in certain situations. Binds to gene promoters and enhancer elements, and thereby regulates a transcriptional program of retinal ganglion cell (RGC) determinant genes. Although the exact mechanism is not certain, retinal transcription regulation by ATOH7 has a role in RGC determination and survival, photoreceptor population development, targeting of RGC axons to the optic nerve and development of the retino-hypothalamic tract. Binds to its own promoter and enhancer sequences, suggesting autoregulation of ATOH7 transcription. Required for retinal circadian rhythm photoentrainment. Plays a role in brainstem auditory signaling and binaural processing. This Homo sapiens (Human) protein is Transcription factor ATOH7.